Reading from the N-terminus, the 239-residue chain is Ribosomal RNA small subunit methyltransferase G (239 aa).

Residues Gly-78, Phe-83, 129–130, and Arg-148 contribute to the S-adenosyl-L-methionine site; that span reads AE.

It belongs to the methyltransferase superfamily. RNA methyltransferase RsmG family.

It is found in the cytoplasm. In terms of biological role, specifically methylates the N7 position of a guanine in 16S rRNA. The sequence is that of Ribosomal RNA small subunit methyltransferase G from Clostridium botulinum (strain Eklund 17B / Type B).